A 492-amino-acid polypeptide reads, in one-letter code: MSKKYIIGIDGGSQSTKVVMYDLEGNVVCEGKGLLQPMHTPDADTAEHPDDDLWASLCFAGHDLMSQFAGNKEDIVGIGLGSIRCCRALLKADGTPAAPLISWQDARVTRPYEHTNPDVAYVTSFSGYLTHRLTGEFKDNIANYFGQWPVDYKSWAWSEDAAVMDKFNIPRHMLFDVQMPGTVLGHITPQAALATHFPAGLPVVCTTSDKPVEALGAGLLDDETAVISLGTYIALMMNGKALPKDPVAYWPIMSSIPQTLLYEGYGIRKGMWTVSWLRDMLGESLIQDARAQDLSPEDLLNKKASCVPPGCNGLMTVLDWLTNPWEPYKRGIMIGFDSSMDYAWIYRSILESVALTLKNNYDNMCNEMNHFAKHVIITGGGSNSDLFMQIFADVFNLPARRNAINGCASLGAAINTAVGLGLYPDYATAVDNMVRVKDIFIPIESNAKRYDAMNKGIFKDLTKHTDVILKKSYEVMHGELGNVDSIQSWSNA.

It belongs to the FGGY kinase family.

This is an uncharacterized protein from Escherichia coli (strain K12).